Here is a 254-residue protein sequence, read N- to C-terminus: Imidazole glycerol phosphate synthase subunit HisF (254 aa).

Residues aspartate 12 and aspartate 131 contribute to the active site.

It belongs to the HisA/HisF family. Heterodimer of HisH and HisF.

The protein resides in the cytoplasm. It catalyses the reaction 5-[(5-phospho-1-deoxy-D-ribulos-1-ylimino)methylamino]-1-(5-phospho-beta-D-ribosyl)imidazole-4-carboxamide + L-glutamine = D-erythro-1-(imidazol-4-yl)glycerol 3-phosphate + 5-amino-1-(5-phospho-beta-D-ribosyl)imidazole-4-carboxamide + L-glutamate + H(+). Its pathway is amino-acid biosynthesis; L-histidine biosynthesis; L-histidine from 5-phospho-alpha-D-ribose 1-diphosphate: step 5/9. In terms of biological role, IGPS catalyzes the conversion of PRFAR and glutamine to IGP, AICAR and glutamate. The HisF subunit catalyzes the cyclization activity that produces IGP and AICAR from PRFAR using the ammonia provided by the HisH subunit. This Frankia casuarinae (strain DSM 45818 / CECT 9043 / HFP020203 / CcI3) protein is Imidazole glycerol phosphate synthase subunit HisF.